The following is a 190-amino-acid chain: GTP cyclohydrolase 1 (190 aa).

The Zn(2+) site is built by Cys79, His82, and Cys151.

The protein belongs to the GTP cyclohydrolase I family. In terms of assembly, toroid-shaped homodecamer, composed of two pentamers of five dimers.

The catalysed reaction is GTP + H2O = 7,8-dihydroneopterin 3'-triphosphate + formate + H(+). The protein operates within cofactor biosynthesis; 7,8-dihydroneopterin triphosphate biosynthesis; 7,8-dihydroneopterin triphosphate from GTP: step 1/1. The protein is GTP cyclohydrolase 1 of Clostridioides difficile (strain 630) (Peptoclostridium difficile).